The following is a 324-amino-acid chain: Putative transport protein TM_1187 (324 aa).

8 helical membrane passes run 12–32 (LYLVLFLVLAKLSPFIITALI), 62–82 (ISNVLVFLTIAYSAVNFFPVI), 105–125 (IPGWLSSILSSISASFSEGAL), 131–151 (IVGYVPSFITAAILIVITAFI), 190–210 (GGQVLVAIFVGLFVGFGAFIF), 227–247 (FVPYLGVVISAIPLLMLAFSV), 252–272 (GLLIGTIILVAANQLEMWVLA), and 285–305 (FIILIMILILGDLFSFGGVLI).

It belongs to the autoinducer-2 exporter (AI-2E) (TC 2.A.86) family.

The protein localises to the cell membrane. This Thermotoga maritima (strain ATCC 43589 / DSM 3109 / JCM 10099 / NBRC 100826 / MSB8) protein is Putative transport protein TM_1187.